We begin with the raw amino-acid sequence, 437 residues long: UDP-N-acetylmuramate--L-alanine ligase (437 aa).

Residue 108–114 (GAHGKTS) coordinates ATP.

Belongs to the MurCDEF family.

The protein localises to the cytoplasm. It carries out the reaction UDP-N-acetyl-alpha-D-muramate + L-alanine + ATP = UDP-N-acetyl-alpha-D-muramoyl-L-alanine + ADP + phosphate + H(+). Its pathway is cell wall biogenesis; peptidoglycan biosynthesis. Functionally, cell wall formation. The polypeptide is UDP-N-acetylmuramate--L-alanine ligase (Staphylococcus aureus).